The chain runs to 859 residues: Paladin (859 aa).

The tract at residues Met1–Ser34 is disordered. Gly2 carries N-myristoyl glycine lipidation. Position 89 is a phosphoserine (Ser89).

It belongs to the paladin family. In terms of tissue distribution, vascular expression detected in the central nervous system, kidney, lung, heart, skeletal muscle, white adipose tissue (WAT), brown adipose tissue, liver, pancreas and spleen. Not expressed in all vessels: for instance, not expressed in capillaries in the brain, and expressed mainly in large vessels in the heart, WAT, liver, pancreas and kidney. Predominant nonvascular expression in myocardium and lung mesenchyme. In large vessels, primarily expressed by smooth muscle cells, but occasionally detected at low levels in the endothelium. Expressed in various cells of the hematopoietic lineage.

Its subcellular location is the cytoplasm. The protein resides in the cytosol. This Mus musculus (Mouse) protein is Paladin (Pald1).